Consider the following 57-residue polypeptide: MTLLKWALLFFVISVVAGILGFTGVSAASADIARILFYIFLVIFLVLLILGLTIFRV.

2 consecutive transmembrane segments (helical) span residues 6–26 and 35–55; these read WALL…TGVS and ILFY…LTIF.

The protein belongs to the UPF0391 family.

The protein resides in the cell membrane. In Bradyrhizobium sp. (strain ORS 278), this protein is UPF0391 membrane protein BRADO2787.